The sequence spans 372 residues: Glutamate 5-kinase (372 aa).

K14 provides a ligand contact to ATP. Positions 54, 141, and 153 each coordinate substrate. Residue 173–174 participates in ATP binding; that stretch reads TD. The 79-residue stretch at 280-358 folds into the PUA domain; that stretch reads RGTLVLDAGA…DAIEKLLGYV (79 aa).

It belongs to the glutamate 5-kinase family.

The protein localises to the cytoplasm. It catalyses the reaction L-glutamate + ATP = L-glutamyl 5-phosphate + ADP. It participates in amino-acid biosynthesis; L-proline biosynthesis; L-glutamate 5-semialdehyde from L-glutamate: step 1/2. Functionally, catalyzes the transfer of a phosphate group to glutamate to form L-glutamate 5-phosphate. The polypeptide is Glutamate 5-kinase (Ectopseudomonas mendocina (strain ymp) (Pseudomonas mendocina)).